We begin with the raw amino-acid sequence, 64 residues long: Large ribosomal subunit protein uL30 (64 aa).

The interval 1–22 (MAKAAKTIKVEQTGSAIRRHHS) is disordered.

Belongs to the universal ribosomal protein uL30 family. Part of the 50S ribosomal subunit.

In Nitrobacter winogradskyi (strain ATCC 25391 / DSM 10237 / CIP 104748 / NCIMB 11846 / Nb-255), this protein is Large ribosomal subunit protein uL30.